Here is a 431-residue protein sequence, read N- to C-terminus: Aspartokinase (431 aa).

Belongs to the aspartokinase family.

The catalysed reaction is L-aspartate + ATP = 4-phospho-L-aspartate + ADP. It functions in the pathway amino-acid biosynthesis; L-lysine biosynthesis via DAP pathway; (S)-tetrahydrodipicolinate from L-aspartate: step 1/4. It participates in amino-acid biosynthesis; L-methionine biosynthesis via de novo pathway; L-homoserine from L-aspartate: step 1/3. The protein operates within amino-acid biosynthesis; L-threonine biosynthesis; L-threonine from L-aspartate: step 1/5. The polypeptide is Aspartokinase (lysC) (Chlamydia trachomatis serovar D (strain ATCC VR-885 / DSM 19411 / UW-3/Cx)).